Consider the following 734-residue polypeptide: Monosaccharide-sensing protein 1 (734 aa).

6 consecutive transmembrane segments (helical) span residues 6 to 26 (LVAL…ATIA), 44 to 64 (GLVV…SGPI), 79 to 99 (VMYF…VLCF), 102 to 122 (LLNG…ISET), 133 to 153 (TLPQ…VFTM), and 163 to 183 (AMLG…VFYL). Residues 351 to 403 (YNKDNDDYATDDGAGDDDDSDNDLRSPLMSRQTTSMDKDMIPHPTSGSTLSMR) are disordered. Residues 357–371 (DYATDDGAGDDDDSD) are compositionally biased toward acidic residues. A phosphoserine mark is found at S446 and S480. 6 helical membrane-spanning segments follow: residues 510 to 530 (ALVV…NGVL), 556 to 576 (ASFL…VVAM), 588 to 608 (LLWT…SELI), 621 to 641 (GCVV…PNIL), 653 to 673 (LCIA…TYSL), and 680 to 700 (IGLV…WIFV).

The protein belongs to the major facilitator superfamily. Sugar transporter (TC 2.A.1.1) family. As to quaternary structure, binds to VIK at the tonoplast. In terms of processing, phosphorylated by VIK; this activation promotes carrier activity. Mostly expressed in juvenile and adult leaves, to a lower extent, in flower tissues, and, at low levels, in roots and stems.

The protein localises to the vacuole membrane. The catalysed reaction is D-glucose(out) + H(+)(in) = D-glucose(in) + H(+)(out). The enzyme catalyses sucrose(out) + H(+)(in) = sucrose(in) + H(+)(out). Its activity is regulated as follows. Enhanced activation by VIK-mediated phosphorylation promoting carrier activity and consequently vacuolar sugar accumulation. Sugar proton-coupled antiporter which contributes to vacuolar sugar import (e.g. monosaccharides including glucose, sucrose and fructose), particularly during stress responses (e.g. in response to cold). Required for cytosolic glucose homeostasis. This is Monosaccharide-sensing protein 1 from Arabidopsis thaliana (Mouse-ear cress).